A 373-amino-acid chain; its full sequence is tRNA-specific 2-thiouridylase MnmA (373 aa).

Residues Gly12–Ser19 and Met38 each bind ATP. The interaction with target base in tRNA stretch occupies residues Asn98–Asp100. The Nucleophile role is filled by Cys103. Cysteines 103 and 200 form a disulfide. Position 127 (Gly127) interacts with ATP. Positions Lys150–Gln152 are interaction with tRNA. Cys200 serves as the catalytic Cysteine persulfide intermediate. Residues Arg312–Tyr313 are interaction with tRNA.

The protein belongs to the MnmA/TRMU family.

The protein localises to the cytoplasm. The enzyme catalyses S-sulfanyl-L-cysteinyl-[protein] + uridine(34) in tRNA + AH2 + ATP = 2-thiouridine(34) in tRNA + L-cysteinyl-[protein] + A + AMP + diphosphate + H(+). Its function is as follows. Catalyzes the 2-thiolation of uridine at the wobble position (U34) of tRNA, leading to the formation of s(2)U34. The protein is tRNA-specific 2-thiouridylase MnmA of Streptococcus pyogenes serotype M3 (strain SSI-1).